Reading from the N-terminus, the 319-residue chain is NADH-cytochrome b5 reductase 2 (319 aa).

Residues 30–46 traverse the membrane as a helical segment; it reads LAPVYLTVGLAGLGVGL. In terms of domain architecture, FAD-binding FR-type spans 69–173; that stretch reads QGWVDLKLSE…KGPLPKYPWE (105 aa). An FAD-binding site is contributed by 176 to 211; it reads KHQHICLIAGGTGITPMYQLARHIFKNPEDKTKVTL.

The protein belongs to the flavoprotein pyridine nucleotide cytochrome reductase family. It depends on FAD as a cofactor.

It is found in the mitochondrion outer membrane. The enzyme catalyses 2 Fe(III)-[cytochrome b5] + NADH = 2 Fe(II)-[cytochrome b5] + NAD(+) + H(+). Its function is as follows. May mediate the reduction of outer membrane cytochrome b5. This is NADH-cytochrome b5 reductase 2 (mcr1) from Aspergillus terreus (strain NIH 2624 / FGSC A1156).